The primary structure comprises 402 residues: Calcium-responsive transactivator (402 aa).

Residues 1 to 148 (MSVAFASARP…TLPTTSMSMS (148 aa)) form an N-terminal auto-inhibitory domain; necessary for interaction with SMARCA4/BRG1 region. The SH2-binding motif lies at 50–53 (YQQI). 5 disordered regions span residues 72–129 (QSLL…GPNH), 141–170 (PTTSMSMSGSGHGSGPGYSHSGPASQSVPL), 195–250 (MHQQ…SSQQ), 262–290 (QYGHGQAASEPMSQQYYPDGHGDYAYQPA), and 305–402 (TQHY…NYQQ). Residues 92 to 106 (QSGSAQGLHSQGSLS) show a composition bias toward low complexity. The segment covering 117–129 (SLMQAQIGNGPNH) has biased composition (polar residues). The tract at residues 149–237 (GSGHGSGPGY…GGGVMGQRPM (89 aa)) is methionine-rich intra-molecular domain. Over residues 196 to 224 (HQQAASSHYSAAQGGSQHYQGQSMAMMGQ) the composition is skewed to low complexity. Residues 251 to 323 (YLGQEEYYGG…SQYSQQQTGY (73 aa)) form an MFD domain region. Low complexity-rich tracts occupy residues 311 to 379 (GGNS…RASQ) and 390 to 402 (YGYEQGQYGNYQQ). The segment at 340–402 (NQQSYPGQQQ…EQGQYGNYQQ (63 aa)) is necessary for nuclear localization. An SH2-binding motif is present at residues 359-362 (SQYS). The SH3-binding motif lies at 377–385 (ASQTGPSTQ). The interval 393–402 (EQGQYGNYQQ) is necessary for interaction with CREBBP and for the recruitment of CREBBP to the nuclear bodies. Residues 397 to 400 (YGNY) carry the SH2-binding motif.

It belongs to the SS18 family. As to quaternary structure, homodimer. Dimerization may be necessary for its function in neuronal dendritic development. Interacts (via C-terminus) with CREBBP (via N-terminus), EP300 and SMARCA4/BRG1. Interacts with the nBAF complex. Association with CREBBP facilitates transcription while the association with SMARCA4/BRG1 suppresses CREST-mediated transcription in resting neurons.

The protein resides in the nucleus. The protein localises to the chromosome. It is found in the centromere. It localises to the kinetochore. Its function is as follows. Transcriptional activator which is required for calcium-dependent dendritic growth and branching in cortical neurons. Recruits CREB-binding protein (CREBBP) to nuclear bodies. Component of the CREST-BRG1 complex, a multiprotein complex that regulates promoter activation by orchestrating a calcium-dependent release of a repressor complex and a recruitment of an activator complex. In resting neurons, transcription of the c-FOS promoter is inhibited by BRG1-dependent recruitment of a phospho-RB1-HDAC1 repressor complex. Upon calcium influx, RB1 is dephosphorylated by calcineurin, which leads to release of the repressor complex. At the same time, there is increased recruitment of CREBBP to the promoter by a CREST-dependent mechanism, which leads to transcriptional activation. The CREST-BRG1 complex also binds to the NR2B promoter, and activity-dependent induction of NR2B expression involves a release of HDAC1 and recruitment of CREBBP. This chain is Calcium-responsive transactivator (SS18L1), found in Bos taurus (Bovine).